The primary structure comprises 298 residues: Probable endonuclease 4 (298 aa).

Residues His69, His111, Glu146, Asp180, His183, His215, Asp228, His230, and Glu260 each contribute to the Zn(2+) site.

The protein belongs to the AP endonuclease 2 family. Zn(2+) serves as cofactor.

The catalysed reaction is Endonucleolytic cleavage to 5'-phosphooligonucleotide end-products.. Endonuclease IV plays a role in DNA repair. It cleaves phosphodiester bonds at apurinic or apyrimidinic (AP) sites, generating a 3'-hydroxyl group and a 5'-terminal sugar phosphate. In Bacillus cereus (strain 03BB102), this protein is Probable endonuclease 4.